A 428-amino-acid polypeptide reads, in one-letter code: Septin homolog spn7 (428 aa).

Residues 15–290 (KGKKLRIMVA…ENYRTEKLSN (276 aa)) form the Septin-type G domain. The interval 25–32 (GSSYTSYQ) is G1 motif. GTP-binding positions include 25–32 (GSSYTSYQ), glycine 86, 166–174 (NSNAFTEEE), and glycine 224. The G3 motif stretch occupies residues 83 to 86 (EVNG). The segment at 165-168 (GNSN) is G4 motif. 2 disordered regions span residues 287 to 345 (KLSN…SEEL) and 387 to 414 (KEFP…KKMD). Residues 290–307 (NDSPSNTSLSLQKQNSIV) show a composition bias toward polar residues. Residues 309–325 (NEDKRSVNGSERTETRS) are compositionally biased toward basic and acidic residues. Composition is skewed to polar residues over residues 326-339 (SIDQ…VSDS) and 392-405 (RTTS…NNTT).

The protein belongs to the TRAFAC class TrmE-Era-EngA-EngB-Septin-like GTPase superfamily. Septin GTPase family. In terms of assembly, component of the sporulation-specific septin complex composed of at least spn2, spn5, spn6 and spn7.

The protein resides in the cytoplasm. Its subcellular location is the nucleus. It localises to the forespore membrane. Septin-like protein involved in the correct orientation of forespore membrane extension during sporulation. Binds phosphatidylinositol 4-phosphate. In Schizosaccharomyces pombe (strain 972 / ATCC 24843) (Fission yeast), this protein is Septin homolog spn7 (spn7).